The primary structure comprises 253 residues: tRNA (guanine-N(1)-)-methyltransferase (253 aa).

Residues G110 and I130–L135 each bind S-adenosyl-L-methionine.

It belongs to the RNA methyltransferase TrmD family. As to quaternary structure, homodimer.

The protein localises to the cytoplasm. It carries out the reaction guanosine(37) in tRNA + S-adenosyl-L-methionine = N(1)-methylguanosine(37) in tRNA + S-adenosyl-L-homocysteine + H(+). Specifically methylates guanosine-37 in various tRNAs. The polypeptide is tRNA (guanine-N(1)-)-methyltransferase (Carboxydothermus hydrogenoformans (strain ATCC BAA-161 / DSM 6008 / Z-2901)).